The sequence spans 350 residues: Bifunctional UDP-glucose 4-epimerase and UDP-xylose 4-epimerase 1 (350 aa).

NAD(+) is bound by residues 15–17 (GFI), 36–40 (DNFDN), 67–68 (DL), Phe89, and Lys93. Substrate is bound at residue Ser133. Tyr157 serves as the catalytic Proton acceptor. Residues Lys161 and Tyr185 each contribute to the NAD(+) site.

Belongs to the NAD(P)-dependent epimerase/dehydratase family. NAD(+) serves as cofactor.

It catalyses the reaction UDP-alpha-D-glucose = UDP-alpha-D-galactose. The catalysed reaction is UDP-beta-L-arabinopyranose = UDP-alpha-D-xylose. Its pathway is carbohydrate metabolism; galactose metabolism. The protein operates within nucleotide-sugar biosynthesis; UDP-L-arabinose biosynthesis; UDP-L-arabinose from UDP-alpha-D-xylose: step 1/1. It participates in cell wall biogenesis; cell wall polysaccharide biosynthesis. With respect to regulation, inhibited by Hg(2+). Catalyzes the interconversion between UDP-glucose and UDP-galactose and the interconversion between UDP-arabinose and UDP-xylose. This chain is Bifunctional UDP-glucose 4-epimerase and UDP-xylose 4-epimerase 1, found in Pisum sativum (Garden pea).